Reading from the N-terminus, the 393-residue chain is MSSTSFTDLLGSSGVDCYEDDEDLRVSGSSFGGYYPERTGSGLPKFKTAQPPPLPISQSSHNFTFSDYLDSPLLLSSSHSLISPTTGTFPLQGFNGTTNNHSDFPWQLQSQPSNASSALQETYGVQDHEKKQEMIPNEIATQNNNQSFGTERQIKIPAYMVSRNSNDGYGWRKYGQKQVKKSENPRSYFKCTYPDCVSKKIVETASDGQITEIIYKGGHNHPKPEFTKRPSQSSLPSSVNGRRLFNPASVVSEPHDQSENSSISFDYSDLEQKSFKSEYGEIDEEEEQPEMKRMKREGEDEGMSIEVSKGVKEPRVVVQTISDIDVLIDGFRWRKYGQKVVKGNTNPRSYYKCTFQGCGVKKQVERSAADERAVLTTYEGRHNHDIPTALRRS.

Positions 160 to 224 form a DNA-binding region, WRKY 1; sequence MVSRNSNDGY…YKGGHNHPKP (65 aa). 4 residues coordinate Zn(2+): C191, C196, H219, and H221. Disordered stretches follow at residues 217-242 and 277-303; these read GGHNHPKPEFTKRPSQSSLPSSVNGR and SEYGEIDEEEEQPEMKRMKREGEDEGM. Residues 229-240 show a composition bias toward polar residues; it reads RPSQSSLPSSVN. Positions 289–298 are enriched in basic and acidic residues; that stretch reads PEMKRMKREG. A DNA-binding region (WRKY 2) is located at residues 322 to 387; that stretch reads SDIDVLIDGF…YEGRHNHDIP (66 aa). Residues C353, C358, H382, and H384 each coordinate Zn(2+).

This sequence belongs to the WRKY group I family. Interacts with MKS1. Interacts with SIB1. Interacts with VQ10 and CAMBP25/VQ15. In terms of processing, phosphorylated by MPK4. As to expression, highly expressed in roots and at lower levels in leaves, stems and seeds.

It is found in the nucleus. Its function is as follows. Transcription factor. Interacts specifically with the W box (5'-(T)TGAC[CT]-3'), a frequently occurring elicitor-responsive cis-acting element. Functions with WRKY33 as positive regulator of salt stress response and abscisic acid (ABA) signaling. Plays a partial role in heat stress tolerance. Functions with WRKY26 and WRKY33 as positive regulator of plant thermotolerance by partially participating in ethylene-response signal transduction pathway. In Arabidopsis thaliana (Mouse-ear cress), this protein is Probable WRKY transcription factor 25 (WRKY25).